Reading from the N-terminus, the 416-residue chain is Transcription factor IIIB 50 kDa subunit (416 aa).

The TFIIB-type zinc finger occupies 3–36 (NGSRCPDCGSSELVEDSHYSQSQLVCSDCGCVVT). Residues Cys-7, Cys-10, Cys-28, and Cys-31 each contribute to the Zn(2+) site. Repeat copies occupy residues 72 to 157 (DLRR…MQIV) and 173 to 249 (VKSY…SLAR). An interaction with target DNA region spans residues 108–114 (AARLQKK). Residues 317–385 (AEVETKQQQP…TGDEDISDSE (69 aa)) are disordered. Phosphoserine is present on Ser-350. A required for the formation of a ternary complex with DNA and TBP; not required for interaction with TBP in the absence of DNA region spans residues 354-360 (LLPPCML). At Cys-358 the chain carries Cysteine sulfenic acid (-SOH). The required for interaction with TBP and formation of a ternary complex with DNA and TBP stretch occupies residues 362–416 (PPKRTHTMPPDSVVTGDEDISDSEIEQYLRTPQEVRDFERAQAASRAAMSVPNPP).

Belongs to the TFIIB family. As to quaternary structure, component of TFIIIB complexes. The TFIIIB complex has two activities, alpha and beta. The TFIIIB-alpha activity complex is composed of TBP, BDP1, and a complex containing both BRF2 and at least four stably associated proteins; this complex inhibits the transcription by pol III via its phosphorylation by CK2; YY1 facilitates the TFIIIB-alpha complex formation. Interacts with TBP; this interaction promotes recruitment of BRF2 to TATA box-containing promoters. Interacts with TBP and the BURE sequence (GC-rich sequence downstream from the TATA box) to form a strong ternary complex which is joined by BDP1; this ternary complex stimulates pol III transcription. Forms a trimeric complex composed of TBP, BRF2 and mini-SNAPc complex (SNAP43, SNAP50, and the N-terminal third of SNAP190) on the promoter. Assembly of the TBP-BRF2 complex is stimulated by SNAP190. Interacts with MAF1 and SNAPC4. Post-translationally, in response to oxidative stress, Cys-358 is reversibly oxidized to cysteine sulfenic acid. Oxidation of Cys-358 impairs formation of a ternary complex with TBP and DNA and down-regulates expression of target genes in response to oxidative stress.

The protein localises to the nucleus. Its function is as follows. General activator of RNA polymerase III transcription. Factor exclusively required for RNA polymerase III transcription of genes with promoter elements upstream of the initiation sites. Contributes to the regulation of gene expression; functions as activator in the absence of oxidative stress. Down-regulates expression of target genes in response to oxidative stress. Overexpression protects cells against apoptosis in response to oxidative stress. This chain is Transcription factor IIIB 50 kDa subunit (Brf2), found in Rattus norvegicus (Rat).